The following is a 144-amino-acid chain: Large ribosomal subunit protein uL15 (144 aa).

Residues Met-1–Gln-54 are disordered. The segment covering Arg-21–Ala-31 has biased composition (gly residues).

Belongs to the universal ribosomal protein uL15 family. In terms of assembly, part of the 50S ribosomal subunit.

In terms of biological role, binds to the 23S rRNA. This chain is Large ribosomal subunit protein uL15, found in Saccharophagus degradans (strain 2-40 / ATCC 43961 / DSM 17024).